Consider the following 545-residue polypeptide: Sulfite oxidase, mitochondrial (545 aa).

The N-terminal 79 residues, Met1–Gln79, are a transit peptide targeting the mitochondrion. A Cytochrome b5 heme-binding domain is found at Thr82–Asn161. His118 provides a ligand contact to heme b. Ser123 is subject to Phosphoserine. Residues His143, Gln145, and His147 each contribute to the heme b site. The segment at Lys165 to Asp174 is hinge. The moco domain stretch occupies residues Pro175 to Lys401. Mo-molybdopterin is bound by residues Phe215–His219, Cys264, Asp322, His361, Arg366, and His377–Lys379. The segment at Gly402 to Arg538 is homodimerization.

In terms of assembly, homodimer. Heme b serves as cofactor. The cofactor is Mo-molybdopterin.

The protein localises to the mitochondrion intermembrane space. It carries out the reaction sulfite + O2 + H2O = sulfate + H2O2. The protein operates within energy metabolism; sulfur metabolism. Catalyzes the oxidation of sulfite to sulfate, the terminal reaction in the oxidative degradation of sulfur-containing amino acids. The sequence is that of Sulfite oxidase, mitochondrial (SUOX) from Macaca fascicularis (Crab-eating macaque).